We begin with the raw amino-acid sequence, 153 residues long: Regulatory protein RecX (153 aa).

Belongs to the RecX family.

Its subcellular location is the cytoplasm. Modulates RecA activity. This Neisseria gonorrhoeae (strain ATCC 700825 / FA 1090) protein is Regulatory protein RecX.